A 518-amino-acid chain; its full sequence is MGDETSPLNLGTVVSVRGSVVDIRFDDDLPSIHTILRANEGEIVLEVLAQHDARHVRAIALTPTQGLARGMAVQDTGGPLKAPVGKGSLSRMFDVFGNTIDRETALSDVQWRSVHRAPPPLARRSTKSEIFETGIKVIDVLMPLERGGKAGLFGGAGVGKTVLLTEMIHNMVGQHEGVSIFCGIGERCREGEELYRDMKQAGVLPNMVMIFAQMNEPPGARFRVGHAALTMAEYFRDDEHRDMLLLIDNIFRFIQAGMEVSGLMGQMPSRLGYQPTMGTELSGLEERIANTDTGAITSIQAVYVPADDFTDPAAVHTFSHLSASIVLSRKRASEGLYPAIDPLQSSSKMATPSIVGARHYGLAQEIRRTLAQYAELKDIIAMLGLEQLSPEDRNVVARARRLERFLTQPFFTTEQFTGHKGKLVSLKDALDGCERILRDEFKDHPESALYMIGTIDEAKGKAKPPAPATPSEPDSKTEARADPKPAAESPAKAIPGPHPQSGAKPQPETDHAADTHES.

154-161 (GGAGVGKT) lines the ATP pocket. The segment at 455-518 (IDEAKGKAKP…TDHAADTHES (64 aa)) is disordered. Composition is skewed to basic and acidic residues over residues 473-485 (PDSKTEARADPKP) and 507-518 (PETDHAADTHES).

This sequence belongs to the ATPase alpha/beta chains family. In terms of assembly, F-type ATPases have 2 components, CF(1) - the catalytic core - and CF(0) - the membrane proton channel. CF(1) has five subunits: alpha(3), beta(3), gamma(1), delta(1), epsilon(1). CF(0) has three main subunits: a(1), b(2) and c(9-12). The alpha and beta chains form an alternating ring which encloses part of the gamma chain. CF(1) is attached to CF(0) by a central stalk formed by the gamma and epsilon chains, while a peripheral stalk is formed by the delta and b chains.

It is found in the cell inner membrane. It catalyses the reaction ATP + H2O + 4 H(+)(in) = ADP + phosphate + 5 H(+)(out). Produces ATP from ADP in the presence of a proton gradient across the membrane. The catalytic sites are hosted primarily by the beta subunits. This Albidiferax ferrireducens (strain ATCC BAA-621 / DSM 15236 / T118) (Rhodoferax ferrireducens) protein is ATP synthase subunit beta 2.